The sequence spans 235 residues: Purine nucleoside phosphorylase DeoD-type (235 aa).

Residue H4 coordinates a purine D-ribonucleoside. Phosphate contacts are provided by residues G20, R24, R43, and 87–90 (RVGT). A purine D-ribonucleoside contacts are provided by residues 178–180 (EME) and 202–203 (SD). Catalysis depends on D203, which acts as the Proton donor.

This sequence belongs to the PNP/UDP phosphorylase family. Homohexamer; trimer of homodimers.

The catalysed reaction is a purine D-ribonucleoside + phosphate = a purine nucleobase + alpha-D-ribose 1-phosphate. It catalyses the reaction a purine 2'-deoxy-D-ribonucleoside + phosphate = a purine nucleobase + 2-deoxy-alpha-D-ribose 1-phosphate. Catalyzes the reversible phosphorolytic breakdown of the N-glycosidic bond in the beta-(deoxy)ribonucleoside molecules, with the formation of the corresponding free purine bases and pentose-1-phosphate. The sequence is that of Purine nucleoside phosphorylase DeoD-type from Geobacillus sp. (strain WCH70).